Reading from the N-terminus, the 359-residue chain is Peptide chain release factor 1 (359 aa).

Q235 bears the N5-methylglutamine mark. The disordered stretch occupies residues 283-309 (QKAESERSQARRSQVGSGDRSERIRTY).

The protein belongs to the prokaryotic/mitochondrial release factor family. In terms of processing, methylated by PrmC. Methylation increases the termination efficiency of RF1.

It localises to the cytoplasm. Its function is as follows. Peptide chain release factor 1 directs the termination of translation in response to the peptide chain termination codons UAG and UAA. The sequence is that of Peptide chain release factor 1 from Brucella suis (strain ATCC 23445 / NCTC 10510).